Here is a 113-residue protein sequence, read N- to C-terminus: C-C motif chemokine 15 (113 aa).

A signal peptide spans 1-21 (MKVSVAALSCLMLVAVLGSQA). Intrachain disulfides connect cysteine 53-cysteine 77, cysteine 54-cysteine 93, and cysteine 64-cysteine 104.

It belongs to the intercrine beta (chemokine CC) family. Monomer. Post-translationally, the N-terminal is proteolytically cleaved by proteases associated with inflammatory responses. The processed forms CCL15(22-92), CCL15(25-92) and CCL15(29-92) exhibit increase in CCR1-mediated signaling and chemotaxis assays in vitro. As to expression, most abundant in heart, skeletal muscle and adrenal gland. Lower levels in placenta, liver, pancreas and bone marrow. CCL15(22-92), CCL15(25-92) and CCL15(29-92) are found in high levels in synovial fluids from rheumatoid patients.

It is found in the secreted. Chemotactic factor that attracts T-cells and monocytes, but not neutrophils, eosinophils, or B-cells. Acts mainly via CC chemokine receptor CCR1. Also binds to CCR3. CCL15(22-92), CCL15(25-92) and CCL15(29-92) are more potent chemoattractants than the CCL15. This is C-C motif chemokine 15 (CCL15) from Homo sapiens (Human).